A 688-amino-acid chain; its full sequence is DNA ligase (688 aa).

Residues 42–46 (DAEYD), 91–92 (SL), and Glu128 contribute to the NAD(+) site. The active-site N6-AMP-lysine intermediate is the Lys130. Positions 151, 188, 305, and 329 each coordinate NAD(+). Zn(2+)-binding residues include Cys423, Cys426, Cys441, and Cys447. The region spanning 608-688 (APQGVLAGKT…GMRKLLEGQL (81 aa)) is the BRCT domain.

This sequence belongs to the NAD-dependent DNA ligase family. LigA subfamily. It depends on Mg(2+) as a cofactor. Mn(2+) is required as a cofactor.

The catalysed reaction is NAD(+) + (deoxyribonucleotide)n-3'-hydroxyl + 5'-phospho-(deoxyribonucleotide)m = (deoxyribonucleotide)n+m + AMP + beta-nicotinamide D-nucleotide.. Functionally, DNA ligase that catalyzes the formation of phosphodiester linkages between 5'-phosphoryl and 3'-hydroxyl groups in double-stranded DNA using NAD as a coenzyme and as the energy source for the reaction. It is essential for DNA replication and repair of damaged DNA. The sequence is that of DNA ligase from Paraburkholderia phytofirmans (strain DSM 17436 / LMG 22146 / PsJN) (Burkholderia phytofirmans).